A 236-amino-acid polypeptide reads, in one-letter code: MRVLGGEVSPFTARARLALDLRGVAYELLDEPLGPKKSDRLLAANPVYGKIPVLLLPDGRAICESAVIVQYIEDVARESGGAEAGSLLLPDDPYERAMHRFWTAFIDDKFWPALDAVSLAPTPGARAQAAEDTRAALSLLEEAFKDRSNGRAFFSGGDAAPGLLDLALGCFLPALRACERLHGLSLIDASATPLLDGWSQRFAAHPAAKRVLPDTEKVVQFTRFLQVQAQFRVHVS.

The GST N-terminal domain maps to 1–80; it reads MRVLGGEVSP…YIEDVARESG (80 aa). Glutathione contacts are provided by residues S9, K37, I51, and 64–65; that span reads ES. In terms of domain architecture, GST C-terminal spans 92–221; that stretch reads DPYERAMHRF…LPDTEKVVQF (130 aa).

This sequence belongs to the GST superfamily. HSP26 family.

It carries out the reaction RX + glutathione = an S-substituted glutathione + a halide anion + H(+). It functions in the pathway pigment biosynthesis; anthocyanin biosynthesis. The sequence is that of Probable glutathione S-transferase BZ2 (BZ2) from Zea mays (Maize).